The following is a 317-amino-acid chain: tRNA-cytidine(32) 2-sulfurtransferase (317 aa).

Residues 46–51 (SGGKDS) carry the PP-loop motif motif. The [4Fe-4S] cluster site is built by Cys-121, Cys-124, and Cys-212.

It belongs to the TtcA family. In terms of assembly, homodimer. Mg(2+) serves as cofactor. The cofactor is [4Fe-4S] cluster.

It is found in the cytoplasm. The catalysed reaction is cytidine(32) in tRNA + S-sulfanyl-L-cysteinyl-[cysteine desulfurase] + AH2 + ATP = 2-thiocytidine(32) in tRNA + L-cysteinyl-[cysteine desulfurase] + A + AMP + diphosphate + H(+). The protein operates within tRNA modification. Catalyzes the ATP-dependent 2-thiolation of cytidine in position 32 of tRNA, to form 2-thiocytidine (s(2)C32). The sulfur atoms are provided by the cysteine/cysteine desulfurase (IscS) system. The sequence is that of tRNA-cytidine(32) 2-sulfurtransferase from Shewanella loihica (strain ATCC BAA-1088 / PV-4).